A 298-amino-acid chain; its full sequence is Mitochondrial substrate carrier family protein N (298 aa).

The Mitochondrial intermembrane portion of the chain corresponds to 1-13 (MAGDLTPSLFLKY). 3 Solcar repeats span residues 8–92 (SLFL…FKKT), 104–188 (FRIP…TAEN), and 207–290 (QKLS…IKQM). A helical transmembrane segment spans residues 14–34 (GFGGALSCSITHSLVVPLDVV). The Mitochondrial matrix segment spans residues 35-60 (KTLLQTNPGKYTGMMNGFSTVIKEQG). Residues 61-81 (PSGLLQGLGPTAVGYALQGFL) traverse the membrane as a helical segment. At 82 to 105 (KFGFYEVFKKTYADAVGEKADQFR) the chain is on the mitochondrial intermembrane side. Residues 106-126 (IPIWLAASATAEVIADIALCP) form a helical membrane-spanning segment. The Mitochondrial matrix segment spans residues 127–162 (NEAVRIRLVAEPTFAKSPVEAFGKIFKQEGVLGFYK). The helical transmembrane segment at 163 to 179 (GLPPILLKQVPYTMAKF) threads the bilayer. At 180 to 208 (AVFEFTAENVYKGLAASGKPKESLTDGQK) the chain is on the mitochondrial intermembrane side. A helical transmembrane segment spans residues 209–229 (LSVSLGSGIVAGIVAAIVSQP). Residues 230–262 (ADTILSKINQEKTDGGVVKAIGNIMRRLGVRGL) lie on the Mitochondrial matrix side of the membrane. A helical membrane pass occupies residues 263-283 (FLGLPTRCFMVGTLTAGQFFI). The Mitochondrial intermembrane portion of the chain corresponds to 284-298 (YDGIKQMLGLTPAKK).

It belongs to the mitochondrial carrier (TC 2.A.29) family.

It localises to the mitochondrion inner membrane. Its function is as follows. Mitochondrial solute carriers shuttle metabolites, nucleotides, and cofactors through the mitochondrial inner membrane. Transports phosphate groups from the cytosol to the mitochondrial matrix. Phosphate is cotransported with H(+). The polypeptide is Mitochondrial substrate carrier family protein N (mcfN) (Dictyostelium discoideum (Social amoeba)).